A 376-amino-acid chain; its full sequence is MNAITSAPAAQTVHVPLGERAYDILIGPGLIARAGAEIASRLKGRKAAIITDENVAPLYLDALVASLDAAGIASAAVVLPAGEKTKSFEHLMTACDKVLEARVERNGCVIALGGGVIGDLSGFAAGIVRRGVRFVQVPTSLLAQVDSSVGGKTGINSRHGKNLIGVFHQPDLVLADTDVLNSLSEREFRAGYAEVAKYGLIDKPDFFAWLEANWKAVFTGGAARIEAIATSCQAKADVVVADERENGQRALLNLGHTFGHALEAATAYDSRRLVHGEGVSIGMVLAHEFSARMNLASPDDARRVERHLQAVGLPTRMAEIPGELPPAEVLMDAIAQDKKVKGGKLTFILTRGIGQSFVADDVPASEVISFLREKHP.

NAD(+) contacts are provided by residues glycine 115–aspartate 119, threonine 139–serine 140, lysine 152, and lysine 161. Positions 194, 256, and 275 each coordinate Zn(2+).

The protein belongs to the sugar phosphate cyclases superfamily. Dehydroquinate synthase family. The cofactor is Co(2+). Zn(2+) serves as cofactor. NAD(+) is required as a cofactor.

It is found in the cytoplasm. It catalyses the reaction 7-phospho-2-dehydro-3-deoxy-D-arabino-heptonate = 3-dehydroquinate + phosphate. It functions in the pathway metabolic intermediate biosynthesis; chorismate biosynthesis; chorismate from D-erythrose 4-phosphate and phosphoenolpyruvate: step 2/7. Catalyzes the conversion of 3-deoxy-D-arabino-heptulosonate 7-phosphate (DAHP) to dehydroquinate (DHQ). In Rhizobium etli (strain CIAT 652), this protein is 3-dehydroquinate synthase.